A 498-amino-acid polypeptide reads, in one-letter code: Cysteine--tRNA ligase (498 aa).

Zn(2+) is bound at residue C44. A 'HIGH' region motif is present at residues 46–56 (PTVYSDAHLGH). Zn(2+) is bound by residues C235, H260, and E264. Positions 291 to 295 (KMSKS) match the 'KMSKS' region motif. Position 294 (K294) interacts with ATP.

This sequence belongs to the class-I aminoacyl-tRNA synthetase family. Monomer. The cofactor is Zn(2+).

It is found in the cytoplasm. The enzyme catalyses tRNA(Cys) + L-cysteine + ATP = L-cysteinyl-tRNA(Cys) + AMP + diphosphate. In Deinococcus radiodurans (strain ATCC 13939 / DSM 20539 / JCM 16871 / CCUG 27074 / LMG 4051 / NBRC 15346 / NCIMB 9279 / VKM B-1422 / R1), this protein is Cysteine--tRNA ligase (cysS).